A 283-amino-acid polypeptide reads, in one-letter code: Protein FdhE homolog (283 aa).

It belongs to the FdhE family.

It localises to the cytoplasm. Functionally, necessary for formate dehydrogenase activity. This is Protein FdhE homolog from Aquifex aeolicus (strain VF5).